The chain runs to 376 residues: 1-acyl-sn-glycerol-3-phosphate acyltransferase 3 (376 aa).

Helical transmembrane passes span 14-34 (VLFL…FIIV) and 49-69 (VAEL…CIKI). An HXXXXD motif motif is present at residues 92-97 (HRSDID). The next 3 helical transmembrane spans lie at 98–118 (WLIG…LAIM), 306–326 (LIVV…LLQW), and 335–355 (IILL…ILIQ).

It belongs to the 1-acyl-sn-glycerol-3-phosphate acyltransferase family. As to expression, predominantly expressed in pollen.

The protein localises to the membrane. It carries out the reaction a 1-acyl-sn-glycero-3-phosphate + an acyl-CoA = a 1,2-diacyl-sn-glycero-3-phosphate + CoA. It participates in phospholipid metabolism; CDP-diacylglycerol biosynthesis; CDP-diacylglycerol from sn-glycerol 3-phosphate: step 2/3. Its function is as follows. Converts lysophosphatidic acid (LPA) into phosphatidic acid by incorporating acyl moiety at the 2 position. Has preference for C-18-CoA substrates compared to C-16-CoA substrates. This is 1-acyl-sn-glycerol-3-phosphate acyltransferase 3 (LPAT3) from Arabidopsis thaliana (Mouse-ear cress).